The chain runs to 444 residues: Tubulin beta chain (444 aa).

8 residues coordinate GTP: Q11, E68, S137, G141, T142, G143, N203, and N225. Mg(2+) is bound at residue E68. Positions 424–444 (QDATAEEEGEFDEDEEMDEMM) are disordered. Over residues 427-444 (TAEEEGEFDEDEEMDEMM) the composition is skewed to acidic residues.

This sequence belongs to the tubulin family. Dimer of alpha and beta chains. A typical microtubule is a hollow water-filled tube with an outer diameter of 25 nm and an inner diameter of 15 nM. Alpha-beta heterodimers associate head-to-tail to form protofilaments running lengthwise along the microtubule wall with the beta-tubulin subunit facing the microtubule plus end conferring a structural polarity. Microtubules usually have 13 protofilaments but different protofilament numbers can be found in some organisms and specialized cells. Requires Mg(2+) as cofactor.

The protein localises to the cytoplasm. It localises to the cytoskeleton. Tubulin is the major constituent of microtubules, a cylinder consisting of laterally associated linear protofilaments composed of alpha- and beta-tubulin heterodimers. Microtubules grow by the addition of GTP-tubulin dimers to the microtubule end, where a stabilizing cap forms. Below the cap, tubulin dimers are in GDP-bound state, owing to GTPase activity of alpha-tubulin. The sequence is that of Tubulin beta chain from Achlya klebsiana.